The following is a 142-amino-acid chain: Hemoglobin anodic subunit alpha (142 aa).

Ser-1 is subject to N-acetylserine. The region spanning 1–142 is the Globin domain; it reads SLSTKDKAVV…LALALADRYR (142 aa). O2 is bound at residue His-59. Heme b is bound at residue His-88.

It belongs to the globin family. Heterotetramer of two alpha chains and two beta chains. As to expression, red blood cells.

In terms of biological role, involved in oxygen transport from gills to the various peripheral tissues. In Gymnothorax unicolor (Brown moray), this protein is Hemoglobin anodic subunit alpha.